The sequence spans 111 residues: Large ribosomal subunit protein P2 (111 aa).

The segment covering 63–84 (ASMPTGGAPAAAAGGAATAPAA) has biased composition (low complexity). Positions 63–111 (ASMPTGGAPAAAAGGAATAPAAEAKEAKKEEKKEESEEEDEDMGFGLFD) are disordered. The span at 85–97 (EAKEAKKEEKKEE) shows a compositional bias: basic and acidic residues. Residue Ser98 is modified to Phosphoserine.

In terms of assembly, part of the ribosomal stalk of the large ribosomal subunit; P1 and P2 exist as dimers which assemble on the P0 scaffold.

Plays an important role in the elongation step of protein synthesis. This Artemia salina (Brine shrimp) protein is Large ribosomal subunit protein P2.